Consider the following 182-residue polypeptide: Adenine phosphoribosyltransferase (182 aa).

This sequence belongs to the purine/pyrimidine phosphoribosyltransferase family. Homodimer.

The protein localises to the cytoplasm. It catalyses the reaction AMP + diphosphate = 5-phospho-alpha-D-ribose 1-diphosphate + adenine. Its pathway is purine metabolism; AMP biosynthesis via salvage pathway; AMP from adenine: step 1/1. Functionally, catalyzes a salvage reaction resulting in the formation of AMP, that is energically less costly than de novo synthesis. The chain is Adenine phosphoribosyltransferase from Campylobacter jejuni subsp. doylei (strain ATCC BAA-1458 / RM4099 / 269.97).